A 25-amino-acid polypeptide reads, in one-letter code: Caerin-2.4 (25 aa).

In terms of tissue distribution, expressed by the skin parotoid and/or rostral glands.

Its subcellular location is the secreted. Its function is as follows. Antibacterial peptide, that adopts an alpha helical conformation which can disrupt bacterial membranes. Each caerin displays a different antimicrobial specificity. This Ranoidea caerulea (Green tree frog) protein is Caerin-2.4.